A 95-amino-acid chain; its full sequence is Small ribosomal subunit protein bS6 (95 aa).

The protein belongs to the bacterial ribosomal protein bS6 family.

Functionally, binds together with bS18 to 16S ribosomal RNA. This Clostridium acetobutylicum (strain ATCC 824 / DSM 792 / JCM 1419 / IAM 19013 / LMG 5710 / NBRC 13948 / NRRL B-527 / VKM B-1787 / 2291 / W) protein is Small ribosomal subunit protein bS6.